A 177-amino-acid chain; its full sequence is Cytochrome c-type biogenesis protein CcmE (177 aa).

At 1–7 the chain is on the cytoplasmic side; sequence MTRKSRR. The helical; Signal-anchor for type II membrane protein transmembrane segment at 8 to 28 threads the bilayer; sequence LILIAACGAVLALALGLILSA. The Periplasmic portion of the chain corresponds to 29–177; that stretch reads MSGSIVFFRS…DATLGQRSER (149 aa). Heme-binding residues include His-122 and Tyr-126. The interval 133–177 is disordered; the sequence is DALKAQGRWQEGGSKEAPKDASKAAPKDAAKPETADATLGQRSER. The span at 145–166 shows a compositional bias: basic and acidic residues; it reads GSKEAPKDASKAAPKDAAKPET.

It belongs to the CcmE/CycJ family.

The protein localises to the cell inner membrane. Its function is as follows. Heme chaperone required for the biogenesis of c-type cytochromes. Transiently binds heme delivered by CcmC and transfers the heme to apo-cytochromes in a process facilitated by CcmF and CcmH. The polypeptide is Cytochrome c-type biogenesis protein CcmE (Methylorubrum extorquens (strain PA1) (Methylobacterium extorquens)).